Here is a 100-residue protein sequence, read N- to C-terminus: Aspartyl/glutamyl-tRNA(Asn/Gln) amidotransferase subunit C (100 aa).

The protein belongs to the GatC family. As to quaternary structure, heterotrimer of A, B and C subunits.

The enzyme catalyses L-glutamyl-tRNA(Gln) + L-glutamine + ATP + H2O = L-glutaminyl-tRNA(Gln) + L-glutamate + ADP + phosphate + H(+). It carries out the reaction L-aspartyl-tRNA(Asn) + L-glutamine + ATP + H2O = L-asparaginyl-tRNA(Asn) + L-glutamate + ADP + phosphate + 2 H(+). Functionally, allows the formation of correctly charged Asn-tRNA(Asn) or Gln-tRNA(Gln) through the transamidation of misacylated Asp-tRNA(Asn) or Glu-tRNA(Gln) in organisms which lack either or both of asparaginyl-tRNA or glutaminyl-tRNA synthetases. The reaction takes place in the presence of glutamine and ATP through an activated phospho-Asp-tRNA(Asn) or phospho-Glu-tRNA(Gln). The chain is Aspartyl/glutamyl-tRNA(Asn/Gln) amidotransferase subunit C from Dictyoglomus thermophilum (strain ATCC 35947 / DSM 3960 / H-6-12).